A 332-amino-acid chain; its full sequence is Cinnamoyl-CoA reductase 2 (332 aa).

NADP(+) contacts are provided by residues 12–18, arginine 37, lysine 43, 63–64, 83–85, tyrosine 156, lysine 160, 183–186, and serine 198; these read GAGGYIA, DL, TAS, and PVLV. Cysteine 149 and cysteine 157 are disulfide-bonded. Catalysis depends on lysine 160, which acts as the Proton donor.

This sequence belongs to the NAD(P)-dependent epimerase/dehydratase family. Dihydroflavonol-4-reductase subfamily. In terms of tissue distribution, expressed at low levels in leaves, stems and flowers.

It carries out the reaction (E)-cinnamaldehyde + NADP(+) + CoA = (E)-cinnamoyl-CoA + NADPH + H(+). It functions in the pathway aromatic compound metabolism; phenylpropanoid biosynthesis. Cinnamoyl-CoA reductase probably involved in the formation of phenolic compounds associated with the hypersensitive response. Seems not to be involved in lignin biosynthesis. The sequence is that of Cinnamoyl-CoA reductase 2 (CCR2) from Arabidopsis thaliana (Mouse-ear cress).